A 123-amino-acid polypeptide reads, in one-letter code: Large ribosomal subunit protein bL19c (123 aa).

The protein belongs to the bacterial ribosomal protein bL19 family.

The protein localises to the plastid. The protein resides in the chloroplast. In Pyropia yezoensis (Susabi-nori), this protein is Large ribosomal subunit protein bL19c.